Reading from the N-terminus, the 116-residue chain is Small ribosomal subunit protein uS13 (116 aa).

Residues 92–116 (RRGLPVRGQNTKNNARTRKGTKRNR) are disordered. Basic residues predominate over residues 106 to 116 (ARTRKGTKRNR).

This sequence belongs to the universal ribosomal protein uS13 family. In terms of assembly, part of the 30S ribosomal subunit. Forms a loose heterodimer with protein S19. Forms two bridges to the 50S subunit in the 70S ribosome.

Located at the top of the head of the 30S subunit, it contacts several helices of the 16S rRNA. In the 70S ribosome it contacts the 23S rRNA (bridge B1a) and protein L5 of the 50S subunit (bridge B1b), connecting the 2 subunits; these bridges are implicated in subunit movement. Contacts the tRNAs in the A and P-sites. In Lactobacillus acidophilus (strain ATCC 700396 / NCK56 / N2 / NCFM), this protein is Small ribosomal subunit protein uS13.